A 103-amino-acid chain; its full sequence is Large ribosomal subunit protein bL21 (103 aa).

Belongs to the bacterial ribosomal protein bL21 family. In terms of assembly, part of the 50S ribosomal subunit. Contacts protein L20.

Functionally, this protein binds to 23S rRNA in the presence of protein L20. This chain is Large ribosomal subunit protein bL21, found in Photobacterium profundum (strain SS9).